A 211-amino-acid chain; its full sequence is Urease accessory protein UreG (211 aa).

Residue 11 to 18 (GPVGAGKT) participates in GTP binding.

It belongs to the SIMIBI class G3E GTPase family. UreG subfamily. In terms of assembly, homodimer. UreD, UreF and UreG form a complex that acts as a GTP-hydrolysis-dependent molecular chaperone, activating the urease apoprotein by helping to assemble the nickel containing metallocenter of UreC. The UreE protein probably delivers the nickel.

The protein resides in the cytoplasm. Functionally, facilitates the functional incorporation of the urease nickel metallocenter. This process requires GTP hydrolysis, probably effectuated by UreG. This chain is Urease accessory protein UreG, found in Actinobacillus pleuropneumoniae (Haemophilus pleuropneumoniae).